A 338-amino-acid chain; its full sequence is Serine/threonine-protein kinase YabT (338 aa).

The 259-residue stretch at Tyr-28–Thr-286 folds into the Protein kinase domain. Residues Leu-34–Val-42 and Lys-55 each bind ATP. Asp-148 acts as the Proton acceptor in catalysis. The tract at residues Asp-266–Ser-312 is disordered. Residues Arg-289–Pro-309 are compositionally biased toward basic residues.

This sequence belongs to the protein kinase superfamily. Ser/Thr protein kinase family. In terms of processing, autophosphorylated.

It catalyses the reaction L-seryl-[protein] + ATP = O-phospho-L-seryl-[protein] + ADP + H(+). The enzyme catalyses L-threonyl-[protein] + ATP = O-phospho-L-threonyl-[protein] + ADP + H(+). Functionally, plays a role in the cell's commitment to sporulation; phosphorylates DNA replication initiation-control protein YabA. Deletion of this kinase delays entry into sporulation but does not affect final spore yield. Overexpression decreases biofilm formation; phosphorylation of YabA probably prevents biofilm formation. This Bacillus subtilis (strain 168) protein is Serine/threonine-protein kinase YabT (yabT).